A 415-amino-acid chain; its full sequence is L-cysteine:1D-myo-inositol 2-amino-2-deoxy-alpha-D-glucopyranoside ligase (415 aa).

Cysteine 43 lines the Zn(2+) pocket. Residues 43-46, threonine 58, and 81-83 each bind L-cysteinyl-5'-AMP; these read CGIT and NVT. Residues 45-55 carry the 'HIGH' region motif; the sequence is ITPYDATHLGH. Positions 187–192 match the 'ERGGDP' region motif; it reads ERGGDP. Residue tryptophan 227 participates in L-cysteinyl-5'-AMP binding. Zn(2+) is bound at residue cysteine 231. 249–251 serves as a coordination point for L-cysteinyl-5'-AMP; it reads GSD. Residue histidine 256 coordinates Zn(2+). Residue isoleucine 283 participates in L-cysteinyl-5'-AMP binding. The 'KMSKS' region signature appears at 289-293; it reads KMSKS.

This sequence belongs to the class-I aminoacyl-tRNA synthetase family. MshC subfamily. Monomer. Zn(2+) serves as cofactor.

It carries out the reaction 1D-myo-inositol 2-amino-2-deoxy-alpha-D-glucopyranoside + L-cysteine + ATP = 1D-myo-inositol 2-(L-cysteinylamino)-2-deoxy-alpha-D-glucopyranoside + AMP + diphosphate + H(+). In terms of biological role, catalyzes the ATP-dependent condensation of GlcN-Ins and L-cysteine to form L-Cys-GlcN-Ins. The polypeptide is L-cysteine:1D-myo-inositol 2-amino-2-deoxy-alpha-D-glucopyranoside ligase (Saccharomonospora viridis (strain ATCC 15386 / DSM 43017 / JCM 3036 / CCUG 5913 / NBRC 12207 / NCIMB 9602 / P101) (Thermoactinomyces viridis)).